We begin with the raw amino-acid sequence, 81 residues long: Lantipeptide prochlorosin 1.1 (81 aa).

Residues 1–65 constitute a propeptide that is removed on maturation; that stretch reads MSEEQLKAFI…DDDLEGVAGG (65 aa). A cross-link (beta-methyllanthionine (Cys-Thr)) is located at residues 68–72; sequence CVQGT. Residues 77–81 constitute a cross-link (beta-methyllanthionine (Thr-Cys)); that stretch reads TINVC.

In terms of processing, cross-links are proved in vitro, when coepressed in E.coli with the ProcM lanthionine synthetase. The beta-methyllanthionine residues have a DL configuration (with 2S,3S,6R stereochemistry). Post-translationally, maturation of prochlorosin involves the enzymatic conversion of Thr, and Ser into dehydrated AA and the formation of thioether bonds with cysteines. This is followed by membrane translocation and cleavage of the modified precursor.

The protein localises to the secreted. In terms of biological role, lanthionine-containing peptide (lantipeptide) with unknown function. Does not show antibiotic activity against Lactococcus lactis 117 and Bacillus subtilis 6633 bacteria. Organisms that produce this peptide live in oligotrophic environments at very dilute concentrations, suggesting this peptide is not secreted to influence other bacteria. This chain is Lantipeptide prochlorosin 1.1, found in Prochlorococcus marinus (strain MIT 9313).